The chain runs to 121 residues: Holin-like protein CidA (121 aa).

The next 3 helical transmembrane spans lie at 27–47 (VHLP…SLKF), 58–78 (GADF…VAVI), and 89–109 (IDLI…TGIL).

Belongs to the CidA/LrgA family. CidA subfamily.

The protein localises to the cell membrane. Increases the activity of extracellular murein hydrolases possibly by mediating their export via hole formation. Inhibited by the antiholin-like proteins LrgAB. In an unstressed cell, the LrgAB products probably inhibit the function of the CidA protein. When a cell is stressed by the addition of antibiotics or by other factors in the environment, CidA possibly oligomerizes within the bacterial cell membrane, creating lesions that disrupt the proton motive force, which in turn results in loss of cell viability. These lesions are also hypothesized to regulate the subsequent cell lysis by either allowing the murein hydrolases access to the cell wall substrate and/or regulating their activity by a possible change in the cell wall pH that results from loss of membrane potential. The sequence is that of Holin-like protein CidA from Bacillus cytotoxicus (strain DSM 22905 / CIP 110041 / 391-98 / NVH 391-98).